We begin with the raw amino-acid sequence, 216 residues long: LexA repressor (216 aa).

The segment at residues arginine 28–arginine 48 is a DNA-binding region (H-T-H motif). Catalysis depends on for autocatalytic cleavage activity residues serine 134 and lysine 171.

It belongs to the peptidase S24 family. As to quaternary structure, homodimer.

It carries out the reaction Hydrolysis of Ala-|-Gly bond in repressor LexA.. Represses a number of genes involved in the response to DNA damage (SOS response), including recA and lexA. In the presence of single-stranded DNA, RecA interacts with LexA causing an autocatalytic cleavage which disrupts the DNA-binding part of LexA, leading to derepression of the SOS regulon and eventually DNA repair. This is LexA repressor from Paraburkholderia phytofirmans (strain DSM 17436 / LMG 22146 / PsJN) (Burkholderia phytofirmans).